The following is a 335-amino-acid chain: Glyceraldehyde-3-phosphate dehydrogenase (335 aa).

Residues 10–11 (RI), Asp31, Arg75, and Thr122 each bind NAD(+). Residues 152–154 (SCT) and Thr183 each bind D-glyceraldehyde 3-phosphate. The Nucleophile role is filled by Cys153. Asn184 lines the NAD(+) pocket. D-glyceraldehyde 3-phosphate-binding positions include Arg198, 211–212 (TG), and Arg234. Position 318 (Asn318) interacts with NAD(+).

It belongs to the glyceraldehyde-3-phosphate dehydrogenase family. In terms of assembly, homotetramer.

Its subcellular location is the cytoplasm. It carries out the reaction D-glyceraldehyde 3-phosphate + phosphate + NAD(+) = (2R)-3-phospho-glyceroyl phosphate + NADH + H(+). The protein operates within carbohydrate degradation; glycolysis; pyruvate from D-glyceraldehyde 3-phosphate: step 1/5. Functionally, catalyzes the oxidative phosphorylation of glyceraldehyde 3-phosphate (G3P) to 1,3-bisphosphoglycerate (BPG) using the cofactor NAD. The first reaction step involves the formation of a hemiacetal intermediate between G3P and a cysteine residue, and this hemiacetal intermediate is then oxidized to a thioester, with concomitant reduction of NAD to NADH. The reduced NADH is then exchanged with the second NAD, and the thioester is attacked by a nucleophilic inorganic phosphate to produce BPG. In Borreliella burgdorferi (strain ATCC 35210 / DSM 4680 / CIP 102532 / B31) (Borrelia burgdorferi), this protein is Glyceraldehyde-3-phosphate dehydrogenase (gap).